Consider the following 265-residue polypeptide: MPRLIQLSDPHLVARAEGRVRGRSALSLFQKALAQALQEQPDLLLVTGDCCHDETWCGYVRLRDAVDAAIQQQAARTVCLGFTAGNHDHPQRLRAVLGRHWVVAPGVMDAGCWRLLVVSSHRAGGCAGVIGGVQLSWLNTQLREAETLGKFVVVALHHPPVPIGDASMDTIGLSDGEQLMDSLKRWPAVRVVLFGHIHQHWKGMAAPRSDLSLLGCPSTLVSFHPVQPCPLGRAWDPGGRLLDLMEDGSVQERLMRWSACEQAAG.

Residues D9, H11, D49, N86, H157, H196, and H198 each coordinate Fe cation. AMP contacts are provided by residues H11, D49, and 86 to 87 (NH). An AMP-binding site is contributed by H198.

This sequence belongs to the cyclic nucleotide phosphodiesterase class-III family. The cofactor is Fe(2+).

The protein is Probable cyclic nucleotide phosphodiesterase SynWH7803_1390 of Synechococcus sp. (strain WH7803).